The sequence spans 300 residues: uncharacterized protein (300 aa).

Polar residues predominate over residues 1-11; that stretch reads MYNEGVTSPSQ. A disordered region spans residues 1-20; it reads MYNEGVTSPSQLARKKNATD. The recombinase DNA-binding region spans 1–92; it reads MYNEGVTSPS…QEILITRKRR (92 aa). Residues 162-249 are a coiled coil; that stretch reads SKENYFKELS…DLEFQKIEKE (88 aa).

This is an uncharacterized protein from Bacillus subtilis (strain 168).